The chain runs to 229 residues: Cytidylate kinase (229 aa).

12 to 20 is an ATP binding site; sequence GPSGSGKGT.

It belongs to the cytidylate kinase family. Type 1 subfamily.

It localises to the cytoplasm. It catalyses the reaction CMP + ATP = CDP + ADP. The enzyme catalyses dCMP + ATP = dCDP + ADP. This is Cytidylate kinase from Stutzerimonas stutzeri (strain A1501) (Pseudomonas stutzeri).